The following is a 1502-amino-acid chain: Gem-associated protein 5 (1502 aa).

The interval 1-124 is important for interaction with U1 snRNA; sequence MKPEPRTLPP…LHWSPTVKDL (124 aa). The interaction with U4 snRNA stretch occupies residues 13–15; that stretch reads NWY. Position 48 is a phosphoserine (Ser48). WD repeat units follow at residues 62 to 104, 107 to 148, 150 to 189, 193 to 264, 280 to 321, 333 to 374, 377 to 417, 424 to 464, 468 to 509, 533 to 573, and 576 to 622; these read GHTE…VVTE, LHQH…QHLF, EPRTIFCLTCSPHHENLVAIGYKDGIVVIIDISKKGEVIH, GHDD…GVMV, TVKE…RRKY, HSRI…CCWT, SLGG…NNYD, GVKS…PPQI, YHKK…VVLQ, RYKL…LLCT, and QHHK…ESNP. Residue Ser624 is modified to Phosphoserine. 2 WD repeats span residues 637 to 677 and 680 to 720; these read GHTA…PLFN and GHRG…HSRP. Disordered stretches follow at residues 740 to 797 and 819 to 838; these read KLKK…SPVV and SSKATSLKKEPAKEKPEALL. Residue Lys754 forms a Glycyl lysine isopeptide (Lys-Gly) (interchain with G-Cter in SUMO2) linkage. Residues Ser757, Ser770, and Ser778 each carry the phosphoserine modification. Residues 825-838 are compositionally biased toward basic and acidic residues; it reads LKKEPAKEKPEALL. Phosphoserine is present on Ser845. 2 disordered regions span residues 1309–1338 and 1378–1427; these read VSDKQSKPEDSASAEDMEQPPGPGPRLSAE and HQKS…SLPE. Residues 1355–1382 are a coiled coil; the sequence is ASLQTSQRTVAEVQETLAEMIRQHQKSQ. The span at 1380–1391 shows a compositional bias: polar residues; the sequence is KSQLCKATTNGP. Residues 1392–1407 show a composition bias toward basic and acidic residues; the sequence is SRDEPSRDEPSQEAER.

The protein belongs to the WD repeat gemin-5 family. Part of the core SMN complex that contains SMN1, GEMIN2/SIP1, DDX20/GEMIN3, GEMIN4, GEMIN5, GEMIN6, GEMIN7, GEMIN8 and STRAP/UNRIP. Part of the SMN-Sm complex that contains SMN1, GEMIN2/SIP1, DDX20/GEMIN3, GEMIN4, GEMIN5, GEMIN6, GEMIN7, GEMIN8, STRAP/UNRIP and the Sm proteins SNRPB, SNRPD1, SNRPD2, SNRPD3, SNRPE, SNRPF and SNRPG. Interacts directly with SMN1, SNRPB, SNRPD1, SNRPD2, SNRPD3 and SNRPE. Identified in a SMN complex that contains GEMIN2/SIP1. Interacts with cytosolic DDX20/GEMIN3 and GEMIN4. Interacts with SNRNP70 and HNRNPU. Identified in a complex with 80S ribosomes; binds to the 60S large ribosomal subunit. Interacts with the ribosomal subunits RPL3 and RPL4.

Its subcellular location is the nucleus. It localises to the nucleoplasm. It is found in the gem. The protein resides in the cytoplasm. Functionally, the SMN complex catalyzes the assembly of small nuclear ribonucleoproteins (snRNPs), the building blocks of the spliceosome, and thereby plays an important role in the splicing of cellular pre-mRNAs. Most spliceosomal snRNPs contain a common set of Sm proteins SNRPB, SNRPD1, SNRPD2, SNRPD3, SNRPE, SNRPF and SNRPG that assemble in a heptameric protein ring on the Sm site of the small nuclear RNA to form the core snRNP (Sm core). In the cytosol, the Sm proteins SNRPD1, SNRPD2, SNRPE, SNRPF and SNRPG are trapped in an inactive 6S pICln-Sm complex by the chaperone CLNS1A that controls the assembly of the core snRNP. To assemble core snRNPs, the SMN complex accepts the trapped 5Sm proteins from CLNS1A forming an intermediate. Binding of snRNA inside 5Sm ultimately triggers eviction of the SMN complex, thereby allowing binding of SNRPD3 and SNRPB to complete assembly of the core snRNP. Within the SMN complex, GEMIN5 recognizes and delivers the small nuclear RNAs (snRNAs) to the SMN complex. Binds to the 7-methylguanosine cap of RNA molecules. Binds to the 3'-UTR of SMN1 mRNA and regulates its translation; does not affect mRNA stability. May play a role in the regulation of protein synthesis via its interaction with ribosomes. The sequence is that of Gem-associated protein 5 (Gemin5) from Mus musculus (Mouse).